Consider the following 131-residue polypeptide: Large ribosomal subunit protein bL20 (131 aa).

The protein belongs to the bacterial ribosomal protein bL20 family.

Its function is as follows. Binds directly to 23S ribosomal RNA and is necessary for the in vitro assembly process of the 50S ribosomal subunit. It is not involved in the protein synthesizing functions of that subunit. This chain is Large ribosomal subunit protein bL20, found in Mycolicibacterium paratuberculosis (strain ATCC BAA-968 / K-10) (Mycobacterium paratuberculosis).